A 41-amino-acid polypeptide reads, in one-letter code: MKILNSLKTAKTRHPDCQIVRRKGKLYVICKSNPRFKARQR.

This sequence belongs to the bacterial ribosomal protein bL36 family.

This is Large ribosomal subunit protein bL36B from Actinobacillus pleuropneumoniae serotype 5b (strain L20).